Consider the following 401-residue polypeptide: Formate-dependent phosphoribosylglycinamide formyltransferase (401 aa).

N(1)-(5-phospho-beta-D-ribosyl)glycinamide is bound by residues 22-23 (EL) and Glu-82. ATP contacts are provided by residues Arg-115, Lys-157, 162 to 167 (SSGKGQ), 197 to 200 (EGFV), and Glu-205. An ATP-grasp domain is found at 120–315 (RLAAETLALP…EFELHARAIL (196 aa)). Mg(2+)-binding residues include Glu-274 and Glu-286. N(1)-(5-phospho-beta-D-ribosyl)glycinamide is bound by residues Asp-293, Lys-362, and 369–370 (RR).

It belongs to the PurK/PurT family. In terms of assembly, homodimer.

The enzyme catalyses N(1)-(5-phospho-beta-D-ribosyl)glycinamide + formate + ATP = N(2)-formyl-N(1)-(5-phospho-beta-D-ribosyl)glycinamide + ADP + phosphate + H(+). It functions in the pathway purine metabolism; IMP biosynthesis via de novo pathway; N(2)-formyl-N(1)-(5-phospho-D-ribosyl)glycinamide from N(1)-(5-phospho-D-ribosyl)glycinamide (formate route): step 1/1. In terms of biological role, involved in the de novo purine biosynthesis. Catalyzes the transfer of formate to 5-phospho-ribosyl-glycinamide (GAR), producing 5-phospho-ribosyl-N-formylglycinamide (FGAR). Formate is provided by PurU via hydrolysis of 10-formyl-tetrahydrofolate. The polypeptide is Formate-dependent phosphoribosylglycinamide formyltransferase (Polaromonas naphthalenivorans (strain CJ2)).